The chain runs to 310 residues: GMP synthase [glutamine-hydrolyzing] subunit B (310 aa).

The 184-residue stretch at 2 to 185 (FKTEPFIEES…LGLPDQIAHR (184 aa)) folds into the GMPS ATP-PPase domain. 29 to 35 (SGGVDSS) serves as a coordination point for ATP.

In terms of assembly, heterodimer composed of a glutamine amidotransferase subunit (A) and a GMP-binding subunit (B).

It catalyses the reaction XMP + L-glutamine + ATP + H2O = GMP + L-glutamate + AMP + diphosphate + 2 H(+). The protein operates within purine metabolism; GMP biosynthesis; GMP from XMP (L-Gln route): step 1/1. Catalyzes the synthesis of GMP from XMP. This chain is GMP synthase [glutamine-hydrolyzing] subunit B, found in Methanococcus maripaludis (strain C7 / ATCC BAA-1331).